The sequence spans 469 residues: 3-isopropylmalate dehydratase large subunit (469 aa).

Cys-350, Cys-410, and Cys-413 together coordinate [4Fe-4S] cluster.

This sequence belongs to the aconitase/IPM isomerase family. LeuC type 1 subfamily. In terms of assembly, heterodimer of LeuC and LeuD. The cofactor is [4Fe-4S] cluster.

The enzyme catalyses (2R,3S)-3-isopropylmalate = (2S)-2-isopropylmalate. It functions in the pathway amino-acid biosynthesis; L-leucine biosynthesis; L-leucine from 3-methyl-2-oxobutanoate: step 2/4. Its function is as follows. Catalyzes the isomerization between 2-isopropylmalate and 3-isopropylmalate, via the formation of 2-isopropylmaleate. This chain is 3-isopropylmalate dehydratase large subunit, found in Rhizobium etli (strain CIAT 652).